A 187-amino-acid chain; its full sequence is Small ribosomal subunit protein uS10m (187 aa).

The protein belongs to the universal ribosomal protein uS10 family. As to quaternary structure, component of the mitochondrial ribosome small subunit (28S) which comprises a 12S rRNA and about 30 distinct proteins.

The protein resides in the mitochondrion. The protein is Small ribosomal subunit protein uS10m (mrps10) of Danio rerio (Zebrafish).